We begin with the raw amino-acid sequence, 229 residues long: 2-C-methyl-D-erythritol 4-phosphate cytidylyltransferase (229 aa).

The protein belongs to the IspD/TarI cytidylyltransferase family. IspD subfamily.

It catalyses the reaction 2-C-methyl-D-erythritol 4-phosphate + CTP + H(+) = 4-CDP-2-C-methyl-D-erythritol + diphosphate. The protein operates within isoprenoid biosynthesis; isopentenyl diphosphate biosynthesis via DXP pathway; isopentenyl diphosphate from 1-deoxy-D-xylulose 5-phosphate: step 2/6. Catalyzes the formation of 4-diphosphocytidyl-2-C-methyl-D-erythritol from CTP and 2-C-methyl-D-erythritol 4-phosphate (MEP). This chain is 2-C-methyl-D-erythritol 4-phosphate cytidylyltransferase, found in Clostridium acetobutylicum (strain ATCC 824 / DSM 792 / JCM 1419 / IAM 19013 / LMG 5710 / NBRC 13948 / NRRL B-527 / VKM B-1787 / 2291 / W).